The primary structure comprises 415 residues: Corticotropin-releasing factor receptor 1 (415 aa).

The N-terminal stretch at Met1–Ala23 is a signal peptide. Over Ser24 to Lys111 the chain is Extracellular. Disulfide bonds link Cys30–Cys54, Cys44–Cys87, and Cys68–Cys102. Residues Asn38, Asn45, Asn51, Asn78, Asn90, and Asn98 are each glycosylated (N-linked (GlcNAc...) asparagine). The important for peptide agonist binding stretch occupies residues His99–Glu108. Residues Ser112–Leu142 form a helical membrane-spanning segment. Topologically, residues Arg143–Cys149 are cytoplasmic. A helical transmembrane segment spans residues Val150–Leu174. Residues Thr175–Arg189 lie on the Extracellular side of the membrane. Cysteines 188 and 258 form a disulfide. A helical membrane pass occupies residues Leu190–Val218. At Leu219 to Arg225 the chain is on the cytoplasmic side. The helical transmembrane segment at Leu226–Tyr253 threads the bilayer. The Extracellular portion of the chain corresponds to Asp254–Asp269. Residues Tyr270–Met295 form a helical membrane-spanning segment. An important for antagonist binding region spans residues Leu280–Ile290. Residues Thr296 to Thr306 lie on the Cytoplasmic side of the membrane. Position 301 is a phosphoserine; by PKA (Ser301). The helical transmembrane segment at Ile307–Phe331 threads the bilayer. Residues Val332 to Glu338 are Extracellular-facing. A helical membrane pass occupies residues Val339–Ser368. At Glu369–Val415 the chain is on the cytoplasmic side.

Belongs to the G-protein coupled receptor 2 family. In terms of assembly, heterodimer; heterodimerizes with GPER1. Interacts (via N-terminal extracellular domain) with CRH and UCN. Interacts with DLG1; this inhibits endocytosis of CRHR1 after agonist binding. C-terminal Ser or Thr residues may be phosphorylated. In terms of processing, phosphorylation at Ser-301 by PKA prevents maximal coupling to Gq-protein, and thereby negatively regulates downstream signaling.

It localises to the cell membrane. The protein localises to the endosome. Its function is as follows. G-protein coupled receptor for CRH (corticotropin-releasing factor) and UCN (urocortin). Has high affinity for CRH and UCN. Ligand binding causes a conformation change that triggers signaling via guanine nucleotide-binding proteins (G proteins) and down-stream effectors, such as adenylate cyclase. Promotes the activation of adenylate cyclase, leading to increased intracellular cAMP levels. Inhibits the activity of the calcium channel CACNA1H. Required for normal embryonic development of the adrenal gland and for normal hormonal responses to stress. Plays a role in the response to anxiogenic stimuli. This is Corticotropin-releasing factor receptor 1 (CRHR1) from Ovis aries (Sheep).